The primary structure comprises 408 residues: Multidrug resistance protein MdtG (408 aa).

Helical transmembrane passes span 16–36 (LIVA…VMPF), 58–78 (IVFS…GGLA), 92–112 (LGMG…QFLI), 115–135 (ALLG…ATQV), 146–166 (TLST…GLLA), 173–193 (PVFF…LFCI), 224–244 (LFVT…ILTL), 256–276 (VAFI…LSAP), 290–310 (ILIT…YVQT), 319–339 (FLLG…LVYN), and 378–398 (AVFL…WNSL).

The protein belongs to the major facilitator superfamily. DHA1 family. MdtG (TC 2.A.1.2.20) subfamily.

It localises to the cell inner membrane. Its function is as follows. Confers resistance to fosfomycin and deoxycholate. The protein is Multidrug resistance protein MdtG of Escherichia coli O6:K15:H31 (strain 536 / UPEC).